A 3961-amino-acid chain; its full sequence is Replicase polyprotein 1ab (3961 aa).

The C4-type; atypical zinc finger occupies 8 to 28; sequence CTCTPNARVFVAEGQVYCTRC. The Peptidase C31 domain maps to 69–180; sequence ECSPTGACWL…EDFCPFECAM (112 aa). The PCP1-alpha stretch occupies residues 69 to 182; sequence ECSPTGACWL…FCPFECAMAD (114 aa). Active-site for Nsp1-alpha papain-like cysteine proteinase activity residues include cysteine 76 and histidine 146. The tract at residues 199–200 is important for host EIF2AK2 inhibition; that stretch reads VS. The interval 263 to 382 is PCP1-beta; that stretch reads DTVPEGNCWW…IFRFGSHKWY (120 aa). The region spanning 263 to 383 is the Peptidase C32 domain; the sequence is DTVPEGNCWW…FRFGSHKWYG (121 aa). Residues cysteine 270 and histidine 339 each act as for Nsp1-beta papain-like cysteine proteinase activity in the active site. Positions 426–513 are OTU-like; it reads LKLYSPPAEG…GEHWTVSVNP (88 aa). Positions 428–535 constitute a Peptidase C33 domain; it reads LYSPPAEGNC…QGCCEHKGGL (108 aa). Active-site for Nsp2 cysteine proteinase activity residues include cysteine 437 and histidine 506. The span at 810 to 819 shows a compositional bias: pro residues; it reads WTPPPPPPRV. 3 disordered regions span residues 810-875, 899-918, and 1148-1191; these read WTPP…FPTP, TPLD…SRPM, and TGEL…PADT. The next 7 membrane-spanning stretches (helical) occupy residues 1266–1286, 1296–1316, 1368–1388, 1583–1603, 1648–1668, 1685–1705, and 1719–1739; these read FCLF…LGVF, GVFG…SDPV, VWHF…GAYV, LVAA…GVYV, LTAL…LIFV, CILL…LCVF, and ILWL…LAVV. The tract at residues 1266 to 1388 is HD1; the sequence is FCLFLCYSYP…ADCILAGAYV (123 aa). Residues 1583–1745 form an HD2 region; that stretch reads LVAALHVACS…LAVVLLVSLW (163 aa). In terms of domain architecture, Peptidase S32 spans 1810–2013; that stretch reads GAFRTQKPSL…ALLAAKPELE (204 aa). Residues histidine 1848, aspartate 1873, and serine 1927 each act as charge relay system; for 3C-like serine proteinase activity in the active site. Helical transmembrane passes span 2036–2056, 2060–2080, 2092–2112, 2137–2157, and 2162–2182; these read WTPL…AVLV, FSFG…VLMI, LSLG…LAVT, SPVP…LYLF, and LHYV…RYFA. Residues 2036-2157 are HD3; sequence WTPLVAVGFF…HLLAIILYLF (122 aa). Residues 2488 to 2651 form the NiRAN domain; the sequence is IIDKLQGLTK…LPYKLYPVRG (164 aa). The RdRp catalytic domain maps to 2890-3024; the sequence is GRCLEADLAS…YAESPSMPNY (135 aa). The 64-residue stretch at 3145 to 3208 folds into the AV ZBD domain; sequence GKKSRMCGYC…PPLGKGTSPL (64 aa). Zn(2+) is bound by residues cysteine 3151, cysteine 3154, cysteine 3164, cysteine 3169, histidine 3172, histidine 3174, histidine 3176, histidine 3178, cysteine 3185, histidine 3187, cysteine 3194, and cysteine 3197. The (+)RNA virus helicase ATP-binding domain maps to 3265–3417; that stretch reads ASTALLPTCK…VFDIMPQTQL (153 aa). 3293–3300 is a binding site for ATP; that stretch reads GPPGAGKT. In terms of domain architecture, (+)RNA virus helicase C-terminal spans 3418–3546; that stretch reads KTIWRFGQNI…AVHRDEQLIV (129 aa). The region spanning 3585-3681 is the AV-Nsp11N/CoV-Nsp15M domain; the sequence is EGSSSPLPKV…LTKFVRGEAQ (97 aa). In terms of domain architecture, NendoU spans 3683–3805; it reads LPETVFSTGR…MVWKGKTAYF (123 aa). Active-site residues include histidine 3714, histidine 3729, and lysine 3758.

Belongs to the arteriviridae polyprotein family. In terms of assembly, nsp1-alpha papain-like: Interacts with host RNF31. As to quaternary structure, interacts with host EIF2AK2; this interaction occurs in host stress granules and leads to EIF2AK2 inhibition. Interacts with host G3BP1; this interaction probably plays a role in Nsp1-beta-mediated inhibition of host EIF2AK2. Interacts with host DDX18; this interaction redistributes host DDX18 to the cytoplasm. In terms of assembly, interacts with host IFITM1. As to quaternary structure, interacts with host DDX5. Interacts with host OTULIN. In terms of assembly, interacts with host LGALS3. Specific enzymatic cleavages in vivo by its own proteases yield mature proteins. Nsp1 is autocleaved into two subunits, Nsp1-alpha and Nsp1-beta. There are two alternative pathways for processing. Either nsp4-5 is cleaved, which represents the major pathway or the nsp5-6 and nsp6-7 are processed, which represents the minor pathway. The major pathway occurs when nsp2 acts as a cofactor for nsp4.

Its subcellular location is the host nucleus. It localises to the host cytoplasm. The protein resides in the host membrane. The protein localises to the host endoplasmic reticulum. It is found in the host perinuclear region. It catalyses the reaction RNA(n) + a ribonucleoside 5'-triphosphate = RNA(n+1) + diphosphate. The enzyme catalyses ATP + H2O = ADP + phosphate + H(+). The catalysed reaction is Thiol-dependent hydrolysis of ester, thioester, amide, peptide and isopeptide bonds formed by the C-terminal Gly of ubiquitin (a 76-residue protein attached to proteins as an intracellular targeting signal).. It carries out the reaction uridylyl-uridylyl-ribonucleotide-RNA = a 3'-end uridylyl-2',3'-cyclophospho-uridine-RNA + a 5'-end dephospho-ribonucleoside-RNA. Contains the activities necessary for the transcription of negative stranded RNA, leader RNA, subgenomic mRNAs and progeny virion RNA as well as proteinases responsible for the cleavage of the polyprotein into functional products. Its function is as follows. Inhibits host IFN-beta production. Plays a role in the degradation of the host transcriptional activator CREBBP protein. The degradation of host CREBBP which is a key component of the IFN enhanceosome is likely responsible for the inhibition of interferon mediated by Nsp1-alpha. Also participates in the inhibition of host NF-kappa-B activation by counteracting LUBAC-dependent induction of NF-kappa-B. Reduces host NEMO ubiquitination by blocking the interaction between the two LUBAC complex components RNF31 and SHARPIN. In terms of biological role, plays a role in blocking host mRNA nuclear export to the cytoplasm and subversion of host protein synthesis. Additionally, inhibits the interferon-activated JAK/STAT signal transduction by mediating the ubiquitination and subsequent proteasomal degradation of host KPNA1. Repurposes the host antiviral stress granules into a proviral platform to counteract the EIF2AK2/PKR restriction, thereby regulating the host inflammatory response. Functionally, multifunctional protein that acts as a viral protease and as a viral antagonist of host immune response. Cleaves the nsp2/nsp3 site in the viral polyprotein. Displays deubiquitinating activity that cleaves both ubiquitinated and ISGylated products and therefore inhibits ubiquitin and ISG15-dependent host innate immunity. Also deubiquinates host NFKBIA, thereby interfering with NFKBIA degradation and impairing subsequent NF-kappa-B activation. Plays a role in the inhibition of the immune response by interacting with host IFITM1. This interaction leads to the proteasomal degradation of the IFN-induced antiviral protein IFITM1. Its function is as follows. Cleaves the majority of cleavage sites present in the C-terminus of the polyprotein. Triggers host apoptosis through caspase-3, -8, and -9 activations. Subverts host innate immune responses through its protease activity. Targets the NF-kappa-B essential modulator NEMO and mediates its cleavage. Blocks host interferon beta induction and downstream signaling by cleaving mitochondrial MAVS, dislodging it from the mitochondria. Impairs host defense by cleaving host mRNA-decapping enzyme DCP1A to attenuate its antiviral activity. In terms of biological role, plays a role in the initial induction of autophagosomes from host endoplasmic reticulum. Functionally, plays a role in the inhibition of host STAT3 signaling pathway by inducing the degradation of STAT3. Responsible for replication and transcription of the viral RNA genome. Its function is as follows. Displays RNA and DNA duplex-unwinding activities with 5' to 3' polarity. In terms of biological role, plays a role in viral transcription/replication and prevents the simultaneous activation of host cell dsRNA sensors, such as MDA5/IFIH1, OAS, PKR and NLRP3 inflammasome. Acts by degrading the 5'-polyuridines generated during replication of the poly(A) region of viral genomic and subgenomic RNAs. Catalyzes a two-step reaction in which a 2'3'-cyclic phosphate (2'3'-cP) is first generated by 2'-O transesterification, which is then hydrolyzed to a 3'-phosphate (3'-P). If not degraded, poly(U) RNA would hybridize with poly(A) RNA tails and activate host dsRNA sensors. Also plays a role in the inhibition of host type I interferon production by recruiting host OTULIN to promote removal of linear ubiquitination targeting host NEMO. The chain is Replicase polyprotein 1ab (rep) from Porcine reproductive and respiratory syndrome virus (strain HB-1) (PRRSV).